Reading from the N-terminus, the 123-residue chain is Small ribosomal subunit protein uS12 (123 aa).

D89 is modified (3-methylthioaspartic acid).

Belongs to the universal ribosomal protein uS12 family. In terms of assembly, part of the 30S ribosomal subunit. Contacts proteins S8 and S17. May interact with IF1 in the 30S initiation complex.

Its function is as follows. With S4 and S5 plays an important role in translational accuracy. In terms of biological role, interacts with and stabilizes bases of the 16S rRNA that are involved in tRNA selection in the A site and with the mRNA backbone. Located at the interface of the 30S and 50S subunits, it traverses the body of the 30S subunit contacting proteins on the other side and probably holding the rRNA structure together. The combined cluster of proteins S8, S12 and S17 appears to hold together the shoulder and platform of the 30S subunit. This is Small ribosomal subunit protein uS12 from Prochlorococcus marinus (strain MIT 9211).